The sequence spans 96 residues: Co-chaperonin GroES (96 aa).

The protein belongs to the GroES chaperonin family. Heptamer of 7 subunits arranged in a ring. Interacts with the chaperonin GroEL.

The protein localises to the cytoplasm. In terms of biological role, together with the chaperonin GroEL, plays an essential role in assisting protein folding. The GroEL-GroES system forms a nano-cage that allows encapsulation of the non-native substrate proteins and provides a physical environment optimized to promote and accelerate protein folding. GroES binds to the apical surface of the GroEL ring, thereby capping the opening of the GroEL channel. The chain is Co-chaperonin GroES from Holospora obtusa.